Here is a 271-residue protein sequence, read N- to C-terminus: MTADIKIVVTGAAGRMGRTLIRLIHETEGLSLAGGLEGEGSPYLGTDLGTLAGLAQPTGLAATADALTLIKDADALIDFSVPAATLEFAALAAQARIVHVIGTTGFEVVDEEKIKAAARHATIVKAGNMSLGVNLLAALVRQAAKALDGQWDIEIVEMHHRHKVDAPSGTALLLGEAAAEGRGVALEDVSARGRDGITGARKAGDIGFASLRGGSVVGDHTVVFATEHERITLGHIAEDRSIFARGALKAARWGQGKGPGLFSMADVLGIE.

Residues 11–16 (GAAGRM), E37, 102–104 (GTT), and 126–129 (AGNM) each bind NAD(+). Catalysis depends on H159, which acts as the Proton donor/acceptor. H160 contacts (S)-2,3,4,5-tetrahydrodipicolinate. K163 functions as the Proton donor in the catalytic mechanism. Position 169–170 (169–170 (GT)) interacts with (S)-2,3,4,5-tetrahydrodipicolinate.

This sequence belongs to the DapB family.

It is found in the cytoplasm. The enzyme catalyses (S)-2,3,4,5-tetrahydrodipicolinate + NAD(+) + H2O = (2S,4S)-4-hydroxy-2,3,4,5-tetrahydrodipicolinate + NADH + H(+). It carries out the reaction (S)-2,3,4,5-tetrahydrodipicolinate + NADP(+) + H2O = (2S,4S)-4-hydroxy-2,3,4,5-tetrahydrodipicolinate + NADPH + H(+). It functions in the pathway amino-acid biosynthesis; L-lysine biosynthesis via DAP pathway; (S)-tetrahydrodipicolinate from L-aspartate: step 4/4. Catalyzes the conversion of 4-hydroxy-tetrahydrodipicolinate (HTPA) to tetrahydrodipicolinate. In Parvibaculum lavamentivorans (strain DS-1 / DSM 13023 / NCIMB 13966), this protein is 4-hydroxy-tetrahydrodipicolinate reductase.